Here is a 244-residue protein sequence, read N- to C-terminus: Diablo homolog, mitochondrial (244 aa).

The N-terminal 38 residues, 1 to 38 (MASLPRRLIWSFSYILRESFPIVSRRNCVSLLRASWRK), are a transit peptide targeting the mitochondrion. Residues 50–54 (AIPVG) carry the IAP-binding motif. Positions 207-218 (DEIKRTITEDKG) are enriched in basic and acidic residues. The interval 207–244 (DEIKRTITEDKGNPPSGGSPRSSLSEEEEIPEAYLRED) is disordered. The span at 220-229 (PPSGGSPRSS) shows a compositional bias: low complexity.

This sequence belongs to the Smac/DIABLO protein family. As to quaternary structure, homodimer.

Its subcellular location is the mitochondrion. Functionally, promotes apoptosis. Acts by opposing the inhibitory activity of inhibitor of apoptosis proteins (IAP). The protein is Diablo homolog, mitochondrial of Xenopus tropicalis (Western clawed frog).